A 178-amino-acid polypeptide reads, in one-letter code: uncharacterized protein (178 aa).

An MSP domain is found at H52–T177.

This is an uncharacterized protein from Caenorhabditis elegans.